A 155-amino-acid polypeptide reads, in one-letter code: Transcriptional repressor NrdR (155 aa).

Residues 3–34 fold into a zinc finger; sequence CPFCGHSSTQVLDSRVSEDGDTVRRRRRCEAC. Residues 49 to 139 form the ATP-cone domain; that stretch reads PAIVKKNGSR…VYRSFEDVSE (91 aa).

Belongs to the NrdR family. Zn(2+) is required as a cofactor.

Functionally, negatively regulates transcription of bacterial ribonucleotide reductase nrd genes and operons by binding to NrdR-boxes. The protein is Transcriptional repressor NrdR of Cupriavidus metallidurans (strain ATCC 43123 / DSM 2839 / NBRC 102507 / CH34) (Ralstonia metallidurans).